A 608-amino-acid polypeptide reads, in one-letter code: UvrABC system protein C (608 aa).

The region spanning 13–91 (HDPGVYRMFD…IKTFQPRYNV (79 aa)) is the GIY-YIG domain. The region spanning 201–236 (QQVLDHLIAKMETASRALDFENAARFRDQIQAVRAV) is the UVR domain.

Belongs to the UvrC family. In terms of assembly, interacts with UvrB in an incision complex.

The protein localises to the cytoplasm. The UvrABC repair system catalyzes the recognition and processing of DNA lesions. UvrC both incises the 5' and 3' sides of the lesion. The N-terminal half is responsible for the 3' incision and the C-terminal half is responsible for the 5' incision. The sequence is that of UvrABC system protein C from Actinobacillus succinogenes (strain ATCC 55618 / DSM 22257 / CCUG 43843 / 130Z).